A 304-amino-acid chain; its full sequence is Protease HtpX homolog (304 aa).

The next 2 membrane-spanning stretches (helical) occupy residues valine 14 to isoleucine 34 and tyrosine 39 to methionine 59. Residue histidine 144 participates in Zn(2+) binding. Glutamate 145 is a catalytic residue. Histidine 148 provides a ligand contact to Zn(2+). Transmembrane regions (helical) follow at residues isoleucine 161–glycine 181 and leucine 202–isoleucine 222. A Zn(2+)-binding site is contributed by glutamate 231. Positions serine 276–serine 295 are disordered.

This sequence belongs to the peptidase M48B family. It depends on Zn(2+) as a cofactor.

The protein localises to the cell membrane. The sequence is that of Protease HtpX homolog from Listeria welshimeri serovar 6b (strain ATCC 35897 / DSM 20650 / CCUG 15529 / CIP 8149 / NCTC 11857 / SLCC 5334 / V8).